A 328-amino-acid chain; its full sequence is D-cysteine desulfhydrase (328 aa).

N6-(pyridoxal phosphate)lysine is present on Lys51.

Belongs to the ACC deaminase/D-cysteine desulfhydrase family. In terms of assembly, homodimer. Pyridoxal 5'-phosphate is required as a cofactor.

It carries out the reaction D-cysteine + H2O = hydrogen sulfide + pyruvate + NH4(+) + H(+). Catalyzes the alpha,beta-elimination reaction of D-cysteine and of several D-cysteine derivatives. It could be a defense mechanism against D-cysteine. This Escherichia coli (strain SMS-3-5 / SECEC) protein is D-cysteine desulfhydrase.